The sequence spans 1515 residues: Metal resistance protein YCF1 (1515 aa).

Over 1 to 32 (MAGNLVSWACKLCRSPEGFGPISFYGDFTQCF) the chain is Vacuolar. A helical membrane pass occupies residues 33–53 (IDGVILNLSAIFMITFGIRDL). Residues 54 to 73 (VNLCKKKHSGIKYRRNWIIV) lie on the Cytoplasmic side of the membrane. The chain crosses the membrane as a helical span at residues 74–94 (SRMALVLLEIAFVSLASLNIS). At 95–99 (KEEAE) the chain is on the vacuolar side. The helical transmembrane segment at 100 to 120 (NFTIVSQYASTMLSLFVALAL) threads the bilayer. At 121–130 (HWIEYDRSVV) the chain is on the cytoplasmic side. A helical membrane pass occupies residues 131–151 (ANTVLLFYWLFETFGNFAKLI). Over 152–169 (NILIRHTYEGIWYSGQTG) the chain is Vacuolar. A helical membrane pass occupies residues 170 to 190 (FILTLFQVITCASILLLEALP). At 191–278 (KKPLMPHQHI…QKSNPSLSWA (88 aa)) the chain is on the cytoplasmic side. Position 251 is a phosphoserine (serine 251). A helical membrane pass occupies residues 279–299 (ICRTFGSKMLLAAFFKAIHDV). The 304-residue stretch at 287–590 (MLLAAFFKAI…IPMVLNSFIE (304 aa)) folds into the ABC transmembrane type-1 1 domain. Topologically, residues 300-345 (LAFTQPQLLRILIKFVTDYNSERQDDHSSLQGFENNHPQKLPIVRG) are vacuolar. The helical transmembrane segment at 346 to 366 (FLIAFAMFLVGFTQTSVLHQY) threads the bilayer. Residues 367–422 (FLNVFNTGMYIKSALTALIYQKSLVLSNEASGLSSTGDIVNLMSVDVQKLQDLTQW) are Cytoplasmic-facing. Residues 423–443 (LNLIWSGPFQIIICLYSLYKL) traverse the membrane as a helical segment. Topologically, residues 444 to 446 (LGN) are vacuolar. The helical transmembrane segment at 447-467 (SMWVGVIILVIMMPLNSFLMR) threads the bilayer. Topologically, residues 468-530 (IQKKLQKSQM…NLTKLGCYMA (63 aa)) are cytoplasmic. Residues 531 to 551 (VTSFQFNIVPFLVSCCTFAVF) form a helical membrane-spanning segment. Over 552–572 (VYTEDRALTTDLVFPALTLFN) the chain is Vacuolar. Residues 573 to 593 (LLSFPLMIIPMVLNSFIEASV) traverse the membrane as a helical segment. At 594–943 (SIGRLFTFFT…VKWNIYLEYA (350 aa)) the chain is on the cytoplasmic side. One can recognise an ABC transporter 1 domain in the interval 626–853 (INIGDDATFL…ADSPLWKLLN (228 aa)). 663 to 670 (GKVGSGKT) provides a ligand contact to ATP. Phosphoserine is present on residues serine 873, serine 903, and serine 908. Threonine 911 carries the phosphothreonine modification. Serine 914 carries the phosphoserine modification. Residues 944–964 (KACNPKSVCVFILFIVISMFL) traverse the membrane as a helical segment. In terms of domain architecture, ABC transmembrane type-1 2 spans 951-1235 (VCVFILFIVI…IVRMTVEVET (285 aa)). Over 965–1001 (SVMGNVWLKHWSEVNSRYGSNPNAARYLAIYFALGIG) the chain is Vacuolar. The helical transmembrane segment at 1002 to 1023 (SALATLIQTIVLWVFCTIHASK) threads the bilayer. At 1024-1066 (YLHNLMTNSVLRAPMTFFETTPIGRILNRFSNDIYKVDALLGR) the chain is on the cytoplasmic side. A helical transmembrane segment spans residues 1067 to 1087 (TFSQFFVNAVKVTFTITVICA). Threonine 1088 is a topological domain (vacuolar). Residues 1089–1109 (TWQFIFIIIPLSVFYIYYQQY) traverse the membrane as a helical segment. The Cytoplasmic portion of the chain corresponds to 1110–1180 (YLRTSRELRR…NANRWLAYRL (71 aa)). Residues 1181 to 1201 (ELIGSIIILGAATLSVFRLKQ) traverse the membrane as a helical segment. At 1202 to 1205 (GTLT) the chain is on the vacuolar side. The helical transmembrane segment at 1206 to 1226 (AGMVGLSLSYALQITQTLNWI) threads the bilayer. Over 1227–1515 (VRMTVEVETN…CMEAGLVNEN (289 aa)) the chain is Cytoplasmic. Residues 1272–1507 (IKFNNYSTRY…NKSLFYSLCM (236 aa)) enclose the ABC transporter 2 domain. Residue 1306–1313 (GRTGAGKS) participates in ATP binding.

It belongs to the ABC transporter superfamily. ABCC family. Conjugate transporter (TC 3.A.1.208) subfamily.

It is found in the vacuole membrane. The enzyme catalyses Cd(2+)(in) + ATP + H2O = Cd(2+)(out) + ADP + phosphate + H(+). It carries out the reaction an S-substituted glutathione(in) + ATP + H2O = an S-substituted glutathione(out) + ADP + phosphate + H(+). In terms of biological role, cooperates for the ATP-dependent vacuolar transport of bilirubin and glutathione conjugates. This is Metal resistance protein YCF1 (YCF1) from Saccharomyces cerevisiae (strain ATCC 204508 / S288c) (Baker's yeast).